A 66-amino-acid chain; its full sequence is Beta-toxin Chui2 (66 aa).

Positions 1 to 66 (KEGYIVNSYT…VWPLKNKTCN (66 aa)) constitute an LCN-type CS-alpha/beta domain. 4 disulfides stabilise this stretch: C12–C65, C16–C41, C25–C46, and C29–C48. N66 is modified (asparagine amide).

This sequence belongs to the long (4 C-C) scorpion toxin superfamily. Sodium channel inhibitor family. Beta subfamily. As to expression, expressed by the venom gland.

Its subcellular location is the secreted. In terms of biological role, beta toxins bind voltage-independently at site-4 of sodium channels (Nav) and shift the voltage of activation toward more negative potentials thereby affecting sodium channel activation and promoting spontaneous and repetitive firing. The chain is Beta-toxin Chui2 from Centruroides huichol (Scorpion).